Consider the following 186-residue polypeptide: Catechol O-methyltransferase (186 aa).

S-adenosyl-L-methionine contacts are provided by residues Val7, Glu29, Ser37, Glu55, Leu56, 82 to 85, Ser84, and Asp106; that span reads GASQ. A Mg(2+)-binding site is contributed by Asp106. Lys109 serves as a coordination point for substrate. 2 residues coordinate Mg(2+): Asp134 and Asn135. Substrate contacts are provided by Asn135 and Glu164. Ser182 is modified (phosphoserine).

It belongs to the class I-like SAM-binding methyltransferase superfamily. Cation-dependent O-methyltransferase family. The cofactor is Mg(2+).

The protein localises to the cytoplasm. It is found in the cell membrane. The catalysed reaction is a catechol + S-adenosyl-L-methionine = a guaiacol + S-adenosyl-L-homocysteine + H(+). The enzyme catalyses 2-hydroxyestrone + S-adenosyl-L-methionine = 2-hydroxy-3-methoxy-estrone + S-adenosyl-L-homocysteine + H(+). It carries out the reaction 4-hydroxyestrone + S-adenosyl-L-methionine = 4-methoxyestrone + S-adenosyl-L-homocysteine + H(+). It catalyses the reaction 2-hydroxyestrone + S-adenosyl-L-methionine = 2-methoxyestrone + S-adenosyl-L-homocysteine + H(+). The catalysed reaction is 4-hydroxy-17beta-estradiol + S-adenosyl-L-methionine = 4-methoxy-17beta-estradiol + S-adenosyl-L-homocysteine + H(+). The enzyme catalyses 2-hydroxy-17beta-estradiol + S-adenosyl-L-methionine = 2-hydroxy-3-methoxy-17beta-estradiol + S-adenosyl-L-homocysteine + H(+). It carries out the reaction 2-hydroxy-17beta-estradiol + S-adenosyl-L-methionine = 2-methoxy-17beta-estradiol + S-adenosyl-L-homocysteine + H(+). Its function is as follows. Catalyzes the O-methylation, and thereby the inactivation, of catecholamine neurotransmitters and catechol hormones. Also shortens the biological half-lives of certain neuroactive drugs, like L-DOPA, alpha-methyl DOPA and isoproterenol. The protein is Catechol O-methyltransferase (COMT) of Sus scrofa (Pig).